The sequence spans 98 residues: Large ribosomal subunit protein uL23 (98 aa).

The protein belongs to the universal ribosomal protein uL23 family. As to quaternary structure, part of the 50S ribosomal subunit. Contacts protein L29, and trigger factor when it is bound to the ribosome.

Its function is as follows. One of the early assembly proteins it binds 23S rRNA. One of the proteins that surrounds the polypeptide exit tunnel on the outside of the ribosome. Forms the main docking site for trigger factor binding to the ribosome. This chain is Large ribosomal subunit protein uL23, found in Methylobacterium radiotolerans (strain ATCC 27329 / DSM 1819 / JCM 2831 / NBRC 15690 / NCIMB 10815 / 0-1).